A 489-amino-acid polypeptide reads, in one-letter code: UDP-N-acetylmuramoyl-L-alanyl-D-glutamate--2,6-diaminopimelate ligase (489 aa).

A UDP-N-acetyl-alpha-D-muramoyl-L-alanyl-D-glutamate-binding site is contributed by Ser30. 108-114 provides a ligand contact to ATP; the sequence is GTNGKTT. UDP-N-acetyl-alpha-D-muramoyl-L-alanyl-D-glutamate is bound by residues Asn149, 150 to 151, Ser177, Gln183, and Arg185; that span reads TT. Residue Lys217 is modified to N6-carboxylysine. Meso-2,6-diaminopimelate-binding positions include Arg383, 407-410, Gly459, and Glu463; that span reads DNPR. The Meso-diaminopimelate recognition motif signature appears at 407 to 410; sequence DNPR.

Belongs to the MurCDEF family. MurE subfamily. Mg(2+) serves as cofactor. Post-translationally, carboxylation is probably crucial for Mg(2+) binding and, consequently, for the gamma-phosphate positioning of ATP.

The protein localises to the cytoplasm. It catalyses the reaction UDP-N-acetyl-alpha-D-muramoyl-L-alanyl-D-glutamate + meso-2,6-diaminopimelate + ATP = UDP-N-acetyl-alpha-D-muramoyl-L-alanyl-gamma-D-glutamyl-meso-2,6-diaminopimelate + ADP + phosphate + H(+). The protein operates within cell wall biogenesis; peptidoglycan biosynthesis. Its function is as follows. Catalyzes the addition of meso-diaminopimelic acid to the nucleotide precursor UDP-N-acetylmuramoyl-L-alanyl-D-glutamate (UMAG) in the biosynthesis of bacterial cell-wall peptidoglycan. This is UDP-N-acetylmuramoyl-L-alanyl-D-glutamate--2,6-diaminopimelate ligase from Geobacillus kaustophilus (strain HTA426).